The sequence spans 345 residues: Nuclear distribution protein nudE-like 1 (345 aa).

Residues 28-190 (QSFQEARDEL…LAVRERQQEV (163 aa)) are a coiled coil. The self-association stretch occupies residues 56 to 166 (VQAEQRNRDL…LDEKESLLVS (111 aa)). The tract at residues 64–189 (DLQADNQRLK…ELAVRERQQE (126 aa)) is interaction with KATNB1. A required for interaction with PAFAH1B1 region spans residues 114-133 (YVRELEQANDDLERAKRATI). Positions 175–345 (RDLRQELAVR…SAPGMLPLSV (171 aa)) are interaction with CENPF. Residues 189–256 (EVTRKSAPSS…SARISALNIV (68 aa)) are interaction with YWHAE. The segment at 191-345 (TRKSAPSSPT…SAPGMLPLSV (155 aa)) is interaction with NEFL. The tract at residues 195–256 (APSSPTLDCE…SARISALNIV (62 aa)) is interaction with KATNA1. Position 215 is a phosphoserine (S215). The segment at 217–240 (PATPVGKGTENSFPSPKAIPNGFG) is disordered. The residue at position 219 (T219) is a Phosphothreonine. Phosphoserine is present on S231. An interaction with DISC1 region spans residues 241–280 (TSPLTPSARISALNIVGDLLRKVGALESKLAACRNFAKDQ). Phosphoserine; by CDK1 is present on S242. T245 is modified (phosphothreonine; by CDK1 and MAPK1). The interval 256–291 (VGDLLRKVGALESKLAACRNFAKDQASRKSYVPGSV) is required for localization to the centrosome and interaction with dynein, dynactin, tubulin gamma, PCM1 and PCNT. C273 carries the S-palmitoyl cysteine; by ZDHHC2, ZDHHC3 and ZDHHC7 lipid modification. Residues 314–345 (KGAVNGFDPAPPPPGLGSSRPSSAPGMLPLSV) are disordered. The span at 329 to 339 (LGSSRPSSAPG) shows a compositional bias: low complexity. S344 carries the post-translational modification Phosphoserine.

It belongs to the nudE family. As to quaternary structure, interacts with PLEKHM1 (via N- and C-terminus). Interacts with dynactin, PCM1 and PCNT. Interacts (via C-terminus) with CENPF. Self-associates. Interacts with DISC1, dynein, tubulin gamma, KATNA1, KATNB1, microtubules, PAFAHB1 and YWHAE. Interacts directly with NEFL and indirectly with NEFH. Interacts with ZNF365. Interacts with GTP-bound RAB9A; the interaction may lead to RAB9A-dynein motor tethering. Phosphorylated by CDK1 and MAPK1. Phosphorylated in mitosis. Phosphorylated by CDK5. Phosphorylation by CDK5 promotes interaction with KATNA1 and YWHAE. Post-translationally, palmitoylation at Cys-273 reduces affinity for dynein. Expressed in brain, liver, lung and testis (at protein level). Expressed in brain, epididymis, eye, heart, kidney, large intestine, liver, ovary, pancreas, prostate, skeletal muscle, smooth muscle, spleen, submaxillary gland, testis, thymus and thyroid. Within the brain expression is pronounced in the cortex, hippocampus, olfactory bulb, striatum, thalamic and hypothalamic structures and in the molecular layer of the cerebellum. Largely excluded from cortical progenitor cells which express NDE1.

It is found in the cytoplasm. It localises to the cytoskeleton. The protein localises to the microtubule organizing center. The protein resides in the centrosome. Its subcellular location is the chromosome. It is found in the centromere. It localises to the kinetochore. The protein localises to the spindle. In terms of biological role, required for organization of the cellular microtubule array and microtubule anchoring at the centrosome. May regulate microtubule organization at least in part by targeting the microtubule severing protein KATNA1 to the centrosome. Also positively regulates the activity of the minus-end directed microtubule motor protein dynein. May enhance dynein-mediated microtubule sliding by targeting dynein to the microtubule plus ends. Required for several dynein- and microtubule-dependent processes such as the maintenance of Golgi integrity, the centripetal motion of secretory vesicles and the coupling of the nucleus and centrosome. Also required during brain development for the migration of newly formed neurons from the ventricular/subventricular zone toward the cortical plate. Plays a role, together with DISC1, in the regulation of neurite outgrowth. Required for mitosis in some cell types but appears to be dispensible for mitosis in cortical neuronal progenitors, which instead requires NDE1. Facilitates the polymerization of neurofilaments from the individual subunits NEFH and NEFL. Positively regulates lysosome peripheral distribution and ruffled border formation in osteoclasts. Plays a role, together with DISC1, in the regulation of neurite outgrowth. May act as a RAB9A/B effector that tethers RAB9-associated late endosomes to the dynein motor for their retrograde transport to the trans-Golgi network. In Mus musculus (Mouse), this protein is Nuclear distribution protein nudE-like 1.